Here is a 150-residue protein sequence, read N- to C-terminus: UPF0098 protein CPn_0877/CP_0992/CPj0877/CpB0906 (150 aa).

This sequence belongs to the UPF0098 family.

This Chlamydia pneumoniae (Chlamydophila pneumoniae) protein is UPF0098 protein CPn_0877/CP_0992/CPj0877/CpB0906.